The primary structure comprises 98 residues: Alpha-elicitin DRE-alpha (98 aa).

Disulfide bonds link C3-C71, C27-C56, and C51-C95.

Belongs to the elicitin family.

The protein localises to the secreted. In terms of biological role, induces local and distal defense responses (incompatible hypersensitive reaction) in plants from the solanaceae and cruciferae families. Elicits leaf necrosis and causes the accumulation of pathogenesis-related proteins. Might interact with the lipidic molecules of the plasma membrane. The protein is Alpha-elicitin DRE-alpha of Phytophthora drechsleri.